Here is a 140-residue protein sequence, read N- to C-terminus: MYDVTSILQILPHRYPFLLVDRIIEIEEGKKAKGIKNVTINEPFFQGHFPGNPVMPGVLIVEAMAQVGAVAILSKEEFKGKTPFFAGIDKVRFKKVVRPGDVLLIETELISLKGYIGKAKATAYVEGEVVCEGELLFAIK.

The active site involves His-48.

The protein belongs to the thioester dehydratase family. FabZ subfamily.

Its subcellular location is the cytoplasm. It catalyses the reaction a (3R)-hydroxyacyl-[ACP] = a (2E)-enoyl-[ACP] + H2O. Involved in unsaturated fatty acids biosynthesis. Catalyzes the dehydration of short chain beta-hydroxyacyl-ACPs and long chain saturated and unsaturated beta-hydroxyacyl-ACPs. The protein is 3-hydroxyacyl-[acyl-carrier-protein] dehydratase FabZ of Caldicellulosiruptor saccharolyticus (strain ATCC 43494 / DSM 8903 / Tp8T 6331).